Consider the following 652-residue polypeptide: MERSRSKRNYHYDQDYDGDSMPRSKPRYNNNYHFGGGGGGNNRYRGGGGGGGGNGRPSKSHPETMATTTYRILCHDAKAGGVIGKSGTIIKSIRQHTGAWINVHELVPGDAERIIEISDNRRRDPDGRMPSFSPAQEALFSVHDRILESEAQFGYGGPPPEEEEDYGGVRPGGGRVVTRLVVSRMHVGCLLGKGGKIIEQMRIETKTHIRILPRESNLPRCVSLSEEIVQIVGELNAVKNALAIVSSRLRESQHRDRSNFQGRSHSPERSFAAAGDDYMPQLRRQSSDRFPRGNFRNNNFSSRQSNYAEEAPAVPVGENVYSEELVFQILCPADKIVRVVGESQGIIDLLQNEIGVDVRVSDPVAGSDEQIITISSEEAPDDPFFPAQEALLHIQTQIIDLIPDKDNLITTRLLVPSRDSICLEGKAGSVSEISRLTGTSVQILAREEIPRCASINDVVIQITGEIRAAREALVELTLLLRSHMFKELSQKETPPASTSTTGPLEGVAGVMEVASSNNTIQSREGPTSSNLNLQQVSTILPQFKEGFGSVAKAGESEHREEVPVTTSRMAVPLVTRSTLEVVLPEAVVPKLVTKSRNKLAQISEWSGASVTIVEDRPEETQNIIRISGTPEQAERAQSLLQGFILSIQEDGP.

The span at 1–14 (MERSRSKRNYHYDQ) shows a compositional bias: basic and acidic residues. A disordered region spans residues 1-63 (MERSRSKRNY…NGRPSKSHPE (63 aa)). The span at 34-55 (FGGGGGGNNRYRGGGGGGGGNG) shows a compositional bias: gly residues. KH domains lie at 67–139 (TTTY…QEAL) and 175–245 (RVVT…LAIV). Residues 253-307 (QHRDRSNFQGRSHSPERSFAAAGDDYMPQLRRQSSDRFPRGNFRNNNFSSRQSNY) form a disordered region. Over residues 292–306 (RGNFRNNNFSSRQSN) the composition is skewed to low complexity. 3 KH domains span residues 324 to 391 (ELVF…QEAL), 408 to 476 (LITT…LVEL), and 576 to 640 (RSTL…QSLL).

Homodimer. Interacts with CPL1. Interacts with RS40 and RS41. Interacts with DRB1/HYL1 and SE. Interacts with CPL2. As to expression, expressed in roots, cotyledons, leaves, flowers and siliques.

It is found in the nucleus. The protein resides in the nucleus speckle. Acts as a negative regulator of osmotic stress-induced gene expression. Involved in the regulation of thermotolerance responses under heat stress. Functions as an upstream regulator of heat stress transcription factor (HSF) genes. Negatively regulates HSFA1A, HSFA1B and HSFA1D, but positively controls the expression of HSFA1E, HSFA3, HSFA9, HSFB3, and DREB2C. Forms a complex with CPL1 that modulates co-transcriptional processes such as mRNA capping and polyadenylation, and functions to repress stress-inducible gene expression. Regulates pre-mRNA processing under salt stress. Involved in primary miRNA processing and pri-miRNA biogenesis. Binds both intronless and intron-containing pri-miRNAs. Acts as a regulator of biotic stress response gene expression and basal JA-mediated responses involved in defense. Acts as a negative regulator of resistance to the fungal pathogen Fusarium oxysporum. The protein is RNA-binding KH domain-containing protein RCF3 of Arabidopsis thaliana (Mouse-ear cress).